A 725-amino-acid chain; its full sequence is Rab-like protein 6 (725 aa).

The residue at position 1 (methionine 1) is an N-acetylmethionine. A small GTPase-like region spans residues 39 to 279 (GVQYNMKIVI…IFLEMMEARS (241 aa)). Residues 50–57 (GDRNTGKT), 100–104 (DVVDK), and 177–179 (YRD) contribute to the GTP site. 2 disordered regions span residues 281 to 364 (GHAS…PAPA) and 378 to 725 (PAAE…YEEL). 2 stretches are compositionally biased toward low complexity: residues 291-325 (QSPS…QLSL) and 343-353 (AMPSSVHSSAP). Basic and acidic residues predominate over residues 410–427 (GLDRSFLEDTSVPKDKKV). Phosphoserine occurs at positions 414, 436, 438, 480, 482, 483, and 502. Over residues 499–514 (QQCSEPETKWSSTKVS) the composition is skewed to polar residues. The segment covering 537-549 (DSERPQEGKDKQV) has biased composition (basic and acidic residues). Residues 569–578 (DDPDFESDES) show a composition bias toward acidic residues. A phosphoserine mark is found at serine 575 and serine 594. Threonine 597 is modified (phosphothreonine). Over residues 632-649 (MGPKESSDEDRDSKLPSK) the composition is skewed to basic and acidic residues. A phosphoserine mark is found at serine 637, serine 638, and serine 644. Positions 652–690 (KKKKKKSKEEEEKTTKKKSKHKKSKDKEEGKEDRKKKRK) are interaction with CDKN2A. Positions 666 to 675 (TKKKSKHKKS) are enriched in basic residues. Gly residues predominate over residues 707 to 725 (LGGGAPGSRHPGGGDYEEL).

The protein belongs to the small GTPase superfamily. Rab family.

The protein localises to the nucleus. The protein resides in the cytoplasm. In terms of biological role, may enhance cellular proliferation. May reduce growth inhibitory activity of CDKN2A. This Mus musculus (Mouse) protein is Rab-like protein 6 (Rabl6).